Reading from the N-terminus, the 75-residue chain is MIFEKVRDIIAEQLGIDPEEITMESSFIDDLGADSLDIVELIMALEEEFDIEIPDEDAEKIKTVGDVVEYLSNLE.

Positions Met-1–Glu-75 constitute a Carrier domain. Residue Ser-35 is modified to O-(pantetheine 4'-phosphoryl)serine.

The protein belongs to the acyl carrier protein (ACP) family. Post-translationally, 4'-phosphopantetheine is transferred from CoA to a specific serine of apo-ACP by AcpS. This modification is essential for activity because fatty acids are bound in thioester linkage to the sulfhydryl of the prosthetic group.

The protein localises to the cytoplasm. Its pathway is lipid metabolism; fatty acid biosynthesis. Its function is as follows. Carrier of the growing fatty acid chain in fatty acid biosynthesis. This chain is Acyl carrier protein, found in Thermoanaerobacter pseudethanolicus (strain ATCC 33223 / 39E) (Clostridium thermohydrosulfuricum).